The primary structure comprises 113 residues: MEIFELISENEKYFNGIPIILPKKKKTYVYKNITFIFYIPSDNKIEQYIQRSELHYSDFIVYGKVIIDDVEMLLLYVNFEYYGISIDGKTKYLGKSIKDLKIRGTKRWKDFTH.

Belongs to the poxviruses A31 family.

The chain is Protein FPV195 from Vertebrata (FPV).